The sequence spans 214 residues: Thymidylate kinase (214 aa).

Position 13 to 20 (13 to 20) interacts with ATP; sequence GPDACGKS.

The protein belongs to the thymidylate kinase family.

The enzyme catalyses dTMP + ATP = dTDP + ADP. Its function is as follows. Phosphorylation of dTMP to form dTDP in both de novo and salvage pathways of dTTP synthesis. This Malacoplasma penetrans (strain HF-2) (Mycoplasma penetrans) protein is Thymidylate kinase.